Here is a 443-residue protein sequence, read N- to C-terminus: ATP-dependent protease ATPase subunit HslU (443 aa).

Residues Ile-18, 60–65 (GVGKTE), Asp-256, Glu-321, and Arg-393 contribute to the ATP site.

This sequence belongs to the ClpX chaperone family. HslU subfamily. As to quaternary structure, a double ring-shaped homohexamer of HslV is capped on each side by a ring-shaped HslU homohexamer. The assembly of the HslU/HslV complex is dependent on binding of ATP.

Its subcellular location is the cytoplasm. ATPase subunit of a proteasome-like degradation complex; this subunit has chaperone activity. The binding of ATP and its subsequent hydrolysis by HslU are essential for unfolding of protein substrates subsequently hydrolyzed by HslV. HslU recognizes the N-terminal part of its protein substrates and unfolds these before they are guided to HslV for hydrolysis. In Vibrio cholerae serotype O1 (strain ATCC 39315 / El Tor Inaba N16961), this protein is ATP-dependent protease ATPase subunit HslU.